The sequence spans 290 residues: Ciliary microtubule inner protein 6 (290 aa).

The tract at residues 76 to 112 (ENQGDWWPHGKGLENPFQPPYDTKSTQRSDFKKPTCP) is disordered. Mn regions lie at residues 128–160 (GIVP…ARKT) and 213–246 (SAES…IRVA). The segment at 197–228 (SGSCSSEQSKKTEKGNSAESKMISPGLCRQNS) is disordered.

Its subcellular location is the cell projection. It is found in the cilium. The sequence is that of Ciliary microtubule inner protein 6 (CIMIP6) from Bos taurus (Bovine).